A 133-amino-acid chain; its full sequence is Small ribosomal subunit protein uS8 (133 aa).

It belongs to the universal ribosomal protein uS8 family. Part of the 30S ribosomal subunit. Contacts proteins S5 and S12.

Its function is as follows. One of the primary rRNA binding proteins, it binds directly to 16S rRNA central domain where it helps coordinate assembly of the platform of the 30S subunit. This is Small ribosomal subunit protein uS8 from Syntrophus aciditrophicus (strain SB).